Reading from the N-terminus, the 354-residue chain is Peroxisomal membrane protein PEX32 (354 aa).

The next 5 membrane-spanning stretches (helical) occupy residues 24 to 44 (LLNM…VIFL), 63 to 83 (FIAI…ACTV), 84 to 104 (LPTI…TTID), 151 to 171 (GFSL…IFTV), and 173 to 193 (SFLL…SVAT). An N-linked (GlcNAc...) asparagine glycan is attached at asparagine 319.

It belongs to the PEX28-32 family. PEX30/31 subfamily.

The protein localises to the peroxisome membrane. It localises to the endoplasmic reticulum membrane. In terms of biological role, with PEX24, contributes to tethering of peroxisomes to the endoplasmic reticulum for organelle biogenesis, positioning and segregation. The chain is Peroxisomal membrane protein PEX32 from Ogataea parapolymorpha (strain ATCC 26012 / BCRC 20466 / JCM 22074 / NRRL Y-7560 / DL-1) (Yeast).